The chain runs to 105 residues: Large ribosomal subunit protein uL24 (105 aa).

This sequence belongs to the universal ribosomal protein uL24 family. Part of the 50S ribosomal subunit.

Functionally, one of two assembly initiator proteins, it binds directly to the 5'-end of the 23S rRNA, where it nucleates assembly of the 50S subunit. In terms of biological role, one of the proteins that surrounds the polypeptide exit tunnel on the outside of the subunit. This Beijerinckia indica subsp. indica (strain ATCC 9039 / DSM 1715 / NCIMB 8712) protein is Large ribosomal subunit protein uL24.